The sequence spans 339 residues: tRNA dimethylallyltransferase (339 aa).

33 to 40 (GPTASGKT) serves as a coordination point for ATP. 35-40 (TASGKT) serves as a coordination point for substrate. Interaction with substrate tRNA regions lie at residues 58 to 61 (DSLL) and 182 to 186 (QRIQR).

This sequence belongs to the IPP transferase family. As to quaternary structure, monomer. Mg(2+) serves as cofactor.

It carries out the reaction adenosine(37) in tRNA + dimethylallyl diphosphate = N(6)-dimethylallyladenosine(37) in tRNA + diphosphate. In terms of biological role, catalyzes the transfer of a dimethylallyl group onto the adenine at position 37 in tRNAs that read codons beginning with uridine, leading to the formation of N6-(dimethylallyl)adenosine (i(6)A). The polypeptide is tRNA dimethylallyltransferase (Acidithiobacillus ferrooxidans (strain ATCC 23270 / DSM 14882 / CIP 104768 / NCIMB 8455) (Ferrobacillus ferrooxidans (strain ATCC 23270))).